The primary structure comprises 375 residues: Anhydro-N-acetylmuramic acid kinase (375 aa).

14-21 serves as a coordination point for ATP; sequence GTSMDGAD.

The protein belongs to the anhydro-N-acetylmuramic acid kinase family.

It carries out the reaction 1,6-anhydro-N-acetyl-beta-muramate + ATP + H2O = N-acetyl-D-muramate 6-phosphate + ADP + H(+). It participates in amino-sugar metabolism; 1,6-anhydro-N-acetylmuramate degradation. The protein operates within cell wall biogenesis; peptidoglycan recycling. Its function is as follows. Catalyzes the specific phosphorylation of 1,6-anhydro-N-acetylmuramic acid (anhMurNAc) with the simultaneous cleavage of the 1,6-anhydro ring, generating MurNAc-6-P. Is required for the utilization of anhMurNAc either imported from the medium or derived from its own cell wall murein, and thus plays a role in cell wall recycling. The protein is Anhydro-N-acetylmuramic acid kinase of Cupriavidus pinatubonensis (strain JMP 134 / LMG 1197) (Cupriavidus necator (strain JMP 134)).